The primary structure comprises 184 residues: UPF0340 protein TTE0860 (184 aa).

This sequence belongs to the UPF0340 family.

This is UPF0340 protein TTE0860 from Caldanaerobacter subterraneus subsp. tengcongensis (strain DSM 15242 / JCM 11007 / NBRC 100824 / MB4) (Thermoanaerobacter tengcongensis).